The primary structure comprises 61 residues: Alpha-conotoxin-like Sm1.1 (61 aa).

The N-terminal stretch at 1–16 (MFTVFLLVVLATTVVS) is a signal peptide. Positions 17–43 (FPSDRASDGRDDEAKDERSDMHESGRK) are excised as a propeptide. Positions 19–46 (SDRASDGRDDEAKDERSDMHESGRKGRG) are disordered. The segment covering 21–42 (RASDGRDDEAKDERSDMHESGR) has biased composition (basic and acidic residues). Intrachain disulfides connect cysteine 48/cysteine 53 and cysteine 49/cysteine 59. A 4-hydroxyproline; partial modification is found at proline 55. Position 59 is a cysteine amide (cysteine 59).

It belongs to the conotoxin A superfamily. As to expression, expressed by the venom duct.

The protein resides in the secreted. In terms of biological role, alpha-conotoxins act on postsynaptic membranes, they bind to the nicotinic acetylcholine receptors (nAChR) and thus inhibit them. In Conus stercusmuscarum (Fly-specked cone), this protein is Alpha-conotoxin-like Sm1.1.